The following is a 206-amino-acid chain: N-(5'-phosphoribosyl)anthranilate isomerase (206 aa).

This sequence belongs to the TrpF family.

It carries out the reaction N-(5-phospho-beta-D-ribosyl)anthranilate = 1-(2-carboxyphenylamino)-1-deoxy-D-ribulose 5-phosphate. It functions in the pathway amino-acid biosynthesis; L-tryptophan biosynthesis; L-tryptophan from chorismate: step 3/5. This Nitrosococcus oceani (strain ATCC 19707 / BCRC 17464 / JCM 30415 / NCIMB 11848 / C-107) protein is N-(5'-phosphoribosyl)anthranilate isomerase.